Consider the following 446-residue polypeptide: N-succinylarginine dihydrolase (446 aa).

Substrate is bound by residues 19-28 (AGLSFGNVAS), Asn-110, and 137-138 (HR). Residue Glu-174 is part of the active site. A substrate-binding site is contributed by Arg-213. The active site involves His-249. Residues Asp-251 and Asn-364 each coordinate substrate. Cys-370 (nucleophile) is an active-site residue.

Belongs to the succinylarginine dihydrolase family. In terms of assembly, homodimer.

It catalyses the reaction N(2)-succinyl-L-arginine + 2 H2O + 2 H(+) = N(2)-succinyl-L-ornithine + 2 NH4(+) + CO2. The protein operates within amino-acid degradation; L-arginine degradation via AST pathway; L-glutamate and succinate from L-arginine: step 2/5. Catalyzes the hydrolysis of N(2)-succinylarginine into N(2)-succinylornithine, ammonia and CO(2). This chain is N-succinylarginine dihydrolase, found in Burkholderia ambifaria (strain MC40-6).